Consider the following 125-residue polypeptide: Small ribosomal subunit protein uS12 (125 aa).

The disordered stretch occupies residues 1–28 (MPTISQLIGSERKRLTRKTKSPALKSCP). At Asp-89 the chain carries 3-methylthioaspartic acid. Residues 104–125 (TAGVKDRRQSRSKYGAKAPKND) are disordered.

It belongs to the universal ribosomal protein uS12 family. Part of the 30S ribosomal subunit. Contacts proteins S8 and S17. May interact with IF1 in the 30S initiation complex.

Functionally, with S4 and S5 plays an important role in translational accuracy. Its function is as follows. Interacts with and stabilizes bases of the 16S rRNA that are involved in tRNA selection in the A site and with the mRNA backbone. Located at the interface of the 30S and 50S subunits, it traverses the body of the 30S subunit contacting proteins on the other side and probably holding the rRNA structure together. The combined cluster of proteins S8, S12 and S17 appears to hold together the shoulder and platform of the 30S subunit. This chain is Small ribosomal subunit protein uS12, found in Prochlorococcus marinus subsp. pastoris (strain CCMP1986 / NIES-2087 / MED4).